The following is a 490-amino-acid chain: Serine/threonine-protein kinase BSK6 (490 aa).

Residue Gly2 is the site of N-myristoyl glycine attachment. Residue Ser25 is modified to Phosphoserine. The 255-residue stretch at 56-310 (DNIVSEHGEK…KSLVTSLVTL (255 aa)) folds into the Protein kinase domain. ATP contacts are provided by residues 62–70 (HGEKAPNVV) and Lys84. Catalysis depends on Asp178, which acts as the Proton acceptor. Ser373 bears the Phosphoserine mark.

This sequence belongs to the protein kinase superfamily. Ser/Thr protein kinase family. In terms of assembly, interacts with BRI1, ASK7/BIN2, ASK9/BIL2, BSK1, BSK5, BSK8 and BSK11. Post-translationally, phosphorylated by BRI1, ASK7/BIN2 and ASK9/BIL2.

It localises to the cell membrane. The enzyme catalyses L-seryl-[protein] + ATP = O-phospho-L-seryl-[protein] + ADP + H(+). It carries out the reaction L-threonyl-[protein] + ATP = O-phospho-L-threonyl-[protein] + ADP + H(+). Functionally, probable serine/threonine kinase that acts as a positive regulator of brassinosteroid (BR) signaling downstream of the receptor kinase BRI1. Functions redundantly with BSK3, BSK4, BSK7 and BSK8. This is Serine/threonine-protein kinase BSK6 from Arabidopsis thaliana (Mouse-ear cress).